Here is a 538-residue protein sequence, read N- to C-terminus: MEIKEISVPLQGVVADYMNGKKEIQSCFDYLLTEDAFKQRLHDLREREFFRQDLVTHLLEYNTQLQAGEFTIQNIKALEDENTYVVIAGQQAGLLTGPLYTVHKIISILQLAKEKEESLGVRVVPVFWIAGEDHDMDEINHTFVTKNKKIKKTIFHDRYPKKASASESEFSIEDCRKWVEEIFKTYPETNFTKDVLQFVDDALGKSHTYVDFFAHLITKMFANSGLILVDSHHPALRKLEVPFLQQIISKYKEIQVGLRNQQEVLKELGFKPIIETKTNAVHIFMEIDNERVLLEENQGKFIGKDGVHSFSYEELMEEMERSPERFSNNVVTRPLMQEYVFPTLAFIGGPGELAYWSELQQVFHTAGFQMPPVVPRLTITYMERDTATDLYDLDLQEIDPFLNNIDNLRDNWLSNQIEEPIDERFIEAKKEIMDIHTSLQQFVKKIDPGLNEFAGKNELKINEQIELLEKMLKRNVEKKHEVQLNKFRRLQFALRPLGAPQERVWNVCYYLNQFGLDFVDRVMEQSFSWDGKHHVIKL.

Residues 460 to 483 (KINEQIELLEKMLKRNVEKKHEVQ) are a coiled coil.

This sequence belongs to the BshC family.

In terms of biological role, involved in bacillithiol (BSH) biosynthesis. May catalyze the last step of the pathway, the addition of cysteine to glucosamine malate (GlcN-Mal) to generate BSH. The polypeptide is Putative cysteine ligase BshC (Bacillus mycoides (strain KBAB4) (Bacillus weihenstephanensis)).